The sequence spans 66 residues: Conotoxin Ca5.2 (66 aa).

Positions 1–22 (MRCVPVFLILLGLIASAPSVDA) are cleaved as a signal peptide. Positions 23-48 (RPQTKDDALASFHDSAKRHLQRLVNA) are excised as a propeptide. Phe62 is subject to Phenylalanine amide.

This sequence belongs to the conotoxin T superfamily. Contains 2 disulfide bonds that can be either 'C1-C3, C2-C4' or 'C1-C4, C2-C3', since these disulfide connectivities have been observed for conotoxins with cysteine framework V (for examples, see AC P0DQQ7 and AC P81755). Expressed by the venom duct.

Its subcellular location is the secreted. This Conus caracteristicus (Characteristic cone) protein is Conotoxin Ca5.2.